The primary structure comprises 1135 residues: DNA-directed RNA polymerase I subunit RPA2 (1135 aa).

The disordered stretch occupies residues 1–24 (MDPGSRWRNLPSGPSLKHLTDPSY). Residue R180 coordinates RNA. The interval 194–208 (IRPKWKTRGPGYTQY) is loop B. Residues 236–247 (LNFIYRKELFFL) form a loop A region. D367 is a binding site for RNA. 2 fork loop regions span residues 439–453 (LRSK…DSGL) and 474–489 (RGAD…VRRL). Position 755 (D755) interacts with Mg(2+). K890 is an RNA binding site. 2 residues coordinate DNA: R1020 and R1036. S1051 is subject to Phosphoserine. 4 residues coordinate Zn(2+): C1070, C1073, C1098, and C1101. A C4-type zinc finger spans residues 1070-1101 (CVKCGSLLSPLLEKPPPSWSAMRNRKYNCTLC).

It belongs to the RNA polymerase beta chain family. As to quaternary structure, component of the RNA polymerase I (Pol I) complex consisting of 13 subunits: a ten-subunit catalytic core composed of POLR1A/RPA1, POLR1B/RPA2, POLR1C/RPAC1, POLR1D/RPAC2, POLR1H/RPA12, POLR2E/RPABC1, POLR2F/RPABC2, POLR2H/RPABC3, POLR2K/RPABC4 and POLR2L/RPABC5; a mobile stalk subunit POLR1F/RPA43 protruding from the core and additional subunits homologous to general transcription factors POLR1E/RPA49 and POLR1G/RPA34. Part of Pol I pre-initiation complex (PIC), in which Pol I core assembles with RRN3 and promoter-bound UTBF and SL1/TIF-IB complex. Requires Mg(2+) as cofactor.

It localises to the nucleus. The protein localises to the nucleolus. The protein resides in the chromosome. It carries out the reaction RNA(n) + a ribonucleoside 5'-triphosphate = RNA(n+1) + diphosphate. In terms of biological role, catalytic core component of RNA polymerase I (Pol I), a DNA-dependent RNA polymerase which synthesizes ribosomal RNA precursors using the four ribonucleoside triphosphates as substrates. Transcribes 47S pre-rRNAs from multicopy rRNA gene clusters, giving rise to 5.8S, 18S and 28S ribosomal RNAs. Pol I-mediated transcription cycle proceeds through transcription initiation, transcription elongation and transcription termination stages. During transcription initiation, Pol I pre-initiation complex (PIC) is recruited by the selectivity factor 1 (SL1/TIF-IB) complex bound to the core promoter that precedes an rDNA repeat unit. The PIC assembly bends the promoter favoring the formation of the transcription bubble and promoter escape. Once the polymerase has escaped from the promoter it enters the elongation phase during which RNA is actively polymerized, based on complementarity with the template DNA strand. Highly processive, assembles in structures referred to as 'Miller trees' where many elongating Pol I complexes queue and transcribe the same rDNA coding regions. At terminator sequences downstream of the rDNA gene, PTRF interacts with Pol I and halts Pol I transcription leading to the release of the RNA transcript and polymerase from the DNA. Forms Pol I active center together with the largest subunit POLR1A/RPA1. Appends one nucleotide at a time to the 3' end of the nascent RNA, with POLR1A/RPA1 contributing a Mg(2+)-coordinating DxDGD motif, and POLR1B/RPA2 participating in the coordination of a second Mg(2+) ion and providing lysine residues believed to facilitate Watson-Crick base pairing between the incoming nucleotide and the template base. Typically, Mg(2+) ions direct a 5' nucleoside triphosphate to form a phosphodiester bond with the 3' hydroxyl of the preceding nucleotide of the nascent RNA, with the elimination of pyrophosphate. Has proofreading activity: Pauses and backtracks to allow the cleavage of a missincorporated nucleotide via POLR1H/RPA12. High Pol I processivity is associated with decreased transcription fidelity. The chain is DNA-directed RNA polymerase I subunit RPA2 from Homo sapiens (Human).